The following is a 312-amino-acid chain: E3 ubiquitin-protein ligase RNF126-B (312 aa).

Zn(2+)-binding residues include Cys-13, Cys-16, Cys-29, and Cys-32. The C4-type zinc-finger motif lies at 13–32 (CHSCTAEITPRLPEYTCPRC). Disordered regions lie at residues 41–63 (PETS…NRPS) and 96–139 (GTSG…RNEG). Low complexity predominate over residues 44–55 (SRNSESNSSNNS). A compositionally biased stretch (basic and acidic residues) spans 102-115 (EETRDGESRREHQS). Positions 124 to 134 (PRARMSTRRGA) are enriched in basic residues. The RING-type zinc finger occupies 228–269 (CPVCKEDYTVGESVRQLPCNHLFHNDCIIPWLEQHDTCPVCR). The interval 275–312 (QNTATNPPGLTDMTFSSSSTSSSSSTSPTDENNTANNS) is disordered. Low complexity predominate over residues 290–301 (SSSSTSSSSSTS). Positions 302-312 (PTDENNTANNS) are enriched in polar residues.

It is found in the cytoplasm. Its subcellular location is the nucleus. It carries out the reaction S-ubiquitinyl-[E2 ubiquitin-conjugating enzyme]-L-cysteine + [acceptor protein]-L-lysine = [E2 ubiquitin-conjugating enzyme]-L-cysteine + N(6)-ubiquitinyl-[acceptor protein]-L-lysine.. It participates in protein modification; protein ubiquitination. Its function is as follows. E3 ubiquitin-protein ligase that mediates ubiquitination oF target proteins. Depending on the associated E2 ligase, mediates 'Lys-27'-, 'Lys-29'-, 'Lys-48'- and/or 'Lys-63'-linked polyubiquitination of substrates. Part of a BAG6-dependent quality control process ensuring that proteins of the secretory pathway that are mislocalized to the cytosol are degraded by the proteasome. Probably acts by providing the ubiquitin ligase activity associated with the BAG6 complex and be responsible for ubiquitination of the hydrophobic mislocalized proteins and their targeting to the proteasome. This Xenopus laevis (African clawed frog) protein is E3 ubiquitin-protein ligase RNF126-B.